Reading from the N-terminus, the 128-residue chain is 3-aminoacrylate deaminase RutC (128 aa).

The protein belongs to the RutC family.

It carries out the reaction (Z)-3-aminoacrylate + H2O + H(+) = 3-oxopropanoate + NH4(+). Functionally, involved in pyrimidine catabolism. Catalyzes the deamination of 3-aminoacrylate to malonic semialdehyde, a reaction that can also occur spontaneously. RutC may facilitate the reaction and modulate the metabolic fitness, rather than catalyzing essential functions. The sequence is that of 3-aminoacrylate deaminase RutC from Enterobacter sp. (strain 638).